Reading from the N-terminus, the 558-residue chain is Polypeptide N-acetylgalactosaminyltransferase 16 (558 aa).

Over 1 to 6 the chain is Cytoplasmic; that stretch reads MRKIRA. The helical; Signal-anchor for type II membrane protein transmembrane segment at 7 to 26 threads the bilayer; it reads NAIAILTVAWILGTFYYLWQ. Residues 27-558 are Lumenal-facing; the sequence is DNRAHAASSS…AQQWQLLPHT (532 aa). Residues 34–46 show a composition bias toward low complexity; the sequence is SSSGRGAQRAGGR. Positions 34 to 53 are disordered; the sequence is SSSGRGAQRAGGRPEQLRED. Intrachain disulfides connect Cys-113–Cys-340, Cys-331–Cys-409, Cys-441–Cys-460, Cys-486–Cys-506, and Cys-530–Cys-543. The tract at residues 122 to 227 is catalytic subdomain A; it reads LPATSVIITF…VEWLQPMLQR (106 aa). Positions 163 and 188 each coordinate substrate. Asp-211 is a Mn(2+) binding site. Position 212 (Ser-212) interacts with substrate. Mn(2+) is bound at residue His-213. The catalytic subdomain B stretch occupies residues 286–348; sequence PIRTPVIAGG…PCSRVGHVFR (63 aa). Trp-317 lines the substrate pocket. His-345 provides a ligand contact to Mn(2+). Substrate contacts are provided by Arg-348, His-351, and Tyr-353. In terms of domain architecture, Ricin B-type lectin spans 428-555; that stretch reads KEVLPGVIKQ…DAQAQQWQLL (128 aa).

This sequence belongs to the glycosyltransferase 2 family. GalNAc-T subfamily. Mn(2+) is required as a cofactor. In the CNS, it is predominantly expressed in several distinct hypothalamic, thalamic and amygdaloid nuclei. The most abundant level of expression is in the paraventricular, ventromedial and arcuate nuclei of the hypothalamus, the anterodorsal and parafascicular nuclei of the thalamus and the central, basomedial and medial nuclei of the amygdala. Also expressed in cerebral cortex, lateral septum, habenula and hippocampus.

It is found in the golgi apparatus membrane. The enzyme catalyses L-seryl-[protein] + UDP-N-acetyl-alpha-D-galactosamine = a 3-O-[N-acetyl-alpha-D-galactosaminyl]-L-seryl-[protein] + UDP + H(+). It carries out the reaction L-threonyl-[protein] + UDP-N-acetyl-alpha-D-galactosamine = a 3-O-[N-acetyl-alpha-D-galactosaminyl]-L-threonyl-[protein] + UDP + H(+). The protein operates within protein modification; protein glycosylation. Functionally, catalyzes the initial reaction in O-linked oligosaccharide biosynthesis, the transfer of an N-acetyl-D-galactosamine residue to a serine or threonine residue on the protein receptor. The polypeptide is Polypeptide N-acetylgalactosaminyltransferase 16 (Galnt16) (Mus musculus (Mouse)).